Here is a 167-residue protein sequence, read N- to C-terminus: D-aminoacyl-tRNA deacylase 2 (167 aa).

Residues 159–160 (GP) carry the Gly-transPro motif, allows the protein to recognize chirality of D-amino acids motif.

The protein belongs to the DTD family. In terms of assembly, homodimer.

The protein resides in the cytoplasm. It catalyses the reaction a D-aminoacyl-tRNA + H2O = a tRNA + a D-alpha-amino acid + H(+). The enzyme catalyses glycyl-tRNA(Ala) + H2O = tRNA(Ala) + glycine + H(+). It carries out the reaction D-tyrosyl-tRNA(Tyr) + H2O = D-tyrosine + tRNA(Tyr). The catalysed reaction is L-alanyl-tRNA(Thr) + H2O = tRNA(Thr) + L-alanine + H(+). Deacylates mischarged D-aminoacyl-tRNAs. Also deacylates mischarged glycyl-tRNA(Ala), protecting cells against glycine mischarging by AlaRS. Probably acts by rejecting L-amino acids from its binding site rather than specific recognition of D-amino acids. Catalyzes the hydrolysis of D-tyrosyl-tRNA(Tyr), has no activity on correctly charged L-tyrosyl-tRNA(Tyr). By recycling D-aminoacyl-tRNA to D-amino acids and free tRNA molecules, this enzyme counteracts the toxicity associated with the formation of D-aminoacyl-tRNA entities in vivo and helps enforce protein L-homochirality. In contrast to DTD1, deacylates L-Ala mischarged on tRNA(Thr)(G4.U69) by alanine-tRNA ligase AARS. Can deacylate L-Ala due to a relaxed specificity for substrate chirality caused by the trans conformation of the Gly-Pro motif in the active site. Also hydrolyzes correctly charged, achiral, glycyl-tRNA(Gly) in vitro, although in vivo EEF1A1/EF-Tu may protect cognate achiral glycyl-tRNA(Gly) from DTD2-mediated deacetylation. In Gallus gallus (Chicken), this protein is D-aminoacyl-tRNA deacylase 2 (DTD2).